Here is an 832-residue protein sequence, read N- to C-terminus: AP-1 complex subunit gamma-1 (832 aa).

The 100-residue stretch at 733-832 folds into the GAE domain; it reads LNVYASLLSA…QFDHKFDETL (100 aa).

As to quaternary structure, adapter protein complex 1 (AP-1) is a heterotetramer composed of two large adaptins (gamma-type subunit APL4 and beta-type subunit APL2), a medium adaptin (mu-type subunit APM1) and a small adaptin (sigma-type subunit APS1). AP-1 interacts with clathrin. Also a component of the AP-1R complex composed of at least APM2, APL4 and APS1.

Its subcellular location is the cytoplasm. The protein localises to the golgi apparatus membrane. It localises to the cytoplasmic vesicle. It is found in the clathrin-coated vesicle membrane. Its function is as follows. Adaptins are components of the adapter complexes which link clathrin to receptors in coated vesicles. Clathrin-associated protein complexes are believed to interact with the cytoplasmic tails of membrane proteins, leading to their selection and concentration. The AP-1 complex interacts directly with clathrin. Component of the AP-1-related (AP-1R) complex, an adapter protein complex that mediates sorting of cargo SNARE SNC1. In contrast to the APM1-containing AP-1 complex, AP-1R is incapable of sorting CHS3. The chain is AP-1 complex subunit gamma-1 (APL4) from Saccharomyces cerevisiae (strain ATCC 204508 / S288c) (Baker's yeast).